Here is a 202-residue protein sequence, read N- to C-terminus: Hypoxanthine-guanine phosphoribosyltransferase (202 aa).

2 residues coordinate diphosphate: lysine 66 and glycine 67. Positions 122 and 123 each coordinate Mg(2+). The active-site Proton acceptor is aspartate 126. GMP is bound by residues lysine 154, phenylalanine 175 to valine 176, and aspartate 182. Diphosphate is bound at residue arginine 188.

The protein belongs to the purine/pyrimidine phosphoribosyltransferase family. In terms of assembly, homodimer and homotetramer in equilibrium. The presence or absence of divalent metal ions, as well as phosphate, can affect the oligomerization state of the enzyme. Likely functions as a tetramer (rather than a dimer) in its biological environment, which is the most active form. The dimeric structure is also active though ~50% of that of the tetramer. The cofactor is Mg(2+).

The protein localises to the cytoplasm. It carries out the reaction IMP + diphosphate = hypoxanthine + 5-phospho-alpha-D-ribose 1-diphosphate. The catalysed reaction is GMP + diphosphate = guanine + 5-phospho-alpha-D-ribose 1-diphosphate. The protein operates within purine metabolism; IMP biosynthesis via salvage pathway; IMP from hypoxanthine: step 1/1. Its pathway is purine metabolism; GMP biosynthesis via salvage pathway; GMP from guanine: step 1/1. Its activity is regulated as follows. Competitively inhibited by acyclic nucleoside phosphonates (ANPs) with Ki values as low as 0.69 uM. Prodrugs of these compounds arrest the growth of a virulent strain of M.tuberculosis with MIC50 values as low as 4.5 uM and possess low cytotoxicity in mammalian cells. Inhibited by pyrrolidine nucleoside bisphosphonates, which are also able to arrest the growth of virulent M.tuberculosis not only in its replicating phase but also in its latent phase, and to arrest the growth of M.tuberculosis in infected macrophages while having low cytotoxicity in mammalian cells. In terms of biological role, purine salvage pathway enzyme that catalyzes the transfer of the ribosyl-5-phosphate group from 5-phospho-alpha-D-ribose 1-diphosphate (PRPP) to the N9 position of the 6-oxopurines hypoxanthine and guanine to form the corresponding ribonucleotides IMP (inosine 5'-monophosphate) and GMP (guanosine 5'-monophosphate), with the release of PPi. Thus, specifically recycles hypoxanthine and guanine imported from the external medium, and converts them to IMP and GMP, respectively. Cannot use xanthine as substrate. The sequence is that of Hypoxanthine-guanine phosphoribosyltransferase from Mycobacterium tuberculosis (strain ATCC 25618 / H37Rv).